The chain runs to 111 residues: MAASAARGAMALRTNIGRPVAFVRKIPWTAASSELREHFAQFGHVRKCTVPFDKETGFHKGMGWIHFSSEEELHNALQQENHVIDGVKLHVQPQRPKALQGDQTSDEEKDF.

The RRM domain occupies 19–96; that stretch reads PVAFVRKIPW…VKLHVQPQRP (78 aa). The segment at 92–111 is disordered; that stretch reads QPQRPKALQGDQTSDEEKDF. Thr104 carries the post-translational modification Phosphothreonine. Phosphoserine is present on Ser105.

It localises to the mitochondrion. Its subcellular location is the nucleus. In terms of biological role, RNA-binding protein that acts as a nuclear receptor corepressor. Probably acts by binding the SRA RNA, and repressing the SRA-mediated nuclear receptor coactivation. Binds the STR7 loop of SRA RNA. Also able to repress glucocorticoid (GR), androgen (AR), thyroid (TR) and VDR-mediated transactivation. The polypeptide is SRA stem-loop-interacting RNA-binding protein, mitochondrial (SLIRP) (Bos taurus (Bovine)).